The primary structure comprises 356 residues: Glucose-1-phosphate thymidylyltransferase (356 aa).

Positions 107 and 221 each coordinate Mg(2+).

Belongs to the glucose-1-phosphate thymidylyltransferase family. Mg(2+) is required as a cofactor.

It catalyses the reaction dTTP + alpha-D-glucose 1-phosphate + H(+) = dTDP-alpha-D-glucose + diphosphate. It functions in the pathway antibiotic biosynthesis. Its function is as follows. Involved in the biosynthesis of the two 2,6-deoxysugars, dTDP-L-oleandrose and dTDP-D-desosamine, attached to the macrolactone ring oleandolide to produce the aglycone antibiotic oleandomycin. Catalyzes the formation of dTDP-glucose from deoxythymidine triphosphate (dTTP) and glucose 1-phosphate. In Streptomyces antibioticus, this protein is Glucose-1-phosphate thymidylyltransferase.